The sequence spans 690 residues: Protein SPT2 homolog (690 aa).

The segment at 1–579 is important for interaction with DNA; the sequence is MDFHNILVMA…PGHRPVFRPQ (579 aa). A coiled-coil region spans residues 40–82; it reads ESAAVQAFLRRKEEEKRKKELEEKRKKERLLAKRIELKHDRKA. 2 disordered regions span residues 105-167 and 186-619; these read PKKR…APAP and EIKV…QEEI. Basic and acidic residues predominate over residues 186 to 228; the sequence is EIKVVKKIEERPRTAEELREREYLERKNKRVETQKKKSEKEVK. Over residues 229 to 243 the composition is skewed to low complexity; sequence SAGISSSSKKATSLK. 2 stretches are compositionally biased toward basic and acidic residues: residues 244–259 and 271–285; these read ECAD…DKHA and TDKK…EKHS. Polar residues predominate over residues 369-380; it reads HETNSSAKRPSS. Positions 383–396 are enriched in gly residues; it reads GKGGSGHPAGGSSA. The span at 397–442 shows a compositional bias: low complexity; the sequence is GPGRSSSNSGTGPGRPGSVSSPGPGRQGSSSAAGPGRPSSSSSLGP. Composition is skewed to gly residues over residues 443–457, 465–477, and 489–521; these read GRLG…GRPG, GRPG…GPGR, and LGSG…GPGR. Residues 545-565 show a composition bias toward polar residues; that stretch reads VSETISSKNLVTRPSNGQING. The important for interaction with histones stretch occupies residues 580–690; that stretch reads GIGRPPVGYK…KRQSKKLRTR (111 aa). The span at 593–617 shows a compositional bias: acidic residues; it reads DDDDDDDEYDSEMDDFIEDEGEPQE. Residues 650–690 are a coiled coil; the sequence is REQQKEEARSLRLGVQEDLEELRREEEELKRKRQSKKLRTR.

Belongs to the SPT2 family. In terms of assembly, interacts with POLR1A. Interacts with histones. Interacts with a heterotetrameric complex formed by histone H3 and H4, especially when the histone tetramer is not bound to DNA.

Its subcellular location is the nucleus. The protein resides in the nucleolus. Functionally, histone chaperone that stabilizes pre-existing histone tetramers and regulates replication-independent histone exchange on chromatin. Required for normal chromatin refolding in the coding region of transcribed genes, and for the suppression of spurious transcription. Binds DNA and histones and promotes nucleosome assembly (in vitro). Modulates RNA polymerase 1-mediated transcription. Required for optimal growth in the presence of the DNA damaging agents actinomycin D or mitomycin C (in vitro). Facilitates formation of tetrameric histone complexes containing histone H3 and H4. Modulates RNA polymerase 1-mediated transcription. Binds DNA, with a preference for branched DNA species, such as Y-form DNA and Holliday junction DNA. This chain is Protein SPT2 homolog (SPTY2D1), found in Gallus gallus (Chicken).